We begin with the raw amino-acid sequence, 627 residues long: Carnitine O-acetyltransferase (627 aa).

The propeptide occupies 1–30 (MDRKQKQAEKARPYGLLKPAALGKIPGRFQ). The residue at position 94 (lysine 94) is an N6-succinyllysine. Lysine 262 carries the N6-acetyllysine; alternate modification. Residue lysine 262 is modified to N6-succinyllysine; alternate. Lysine 269 is subject to N6-acetyllysine. Catalysis depends on histidine 344, which acts as the Proton acceptor. CoA is bound by residues lysine 420 and 424–431 (KSEKISPD). (R)-carnitine is bound by residues tyrosine 453 and serine 455. Serine 457 is a CoA binding site. Position 466 (threonine 466) interacts with (R)-carnitine. Position 556 (glutamine 556) interacts with CoA. The Microbody targeting signal signature appears at 625-627 (SKL).

Belongs to the carnitine/choline acetyltransferase family. In terms of assembly, monomer.

It localises to the endoplasmic reticulum. It is found in the peroxisome. Its subcellular location is the mitochondrion inner membrane. It carries out the reaction (R)-carnitine + acetyl-CoA = O-acetyl-(R)-carnitine + CoA. The catalysed reaction is propanoyl-CoA + (R)-carnitine = O-propanoyl-(R)-carnitine + CoA. The enzyme catalyses butanoyl-CoA + (R)-carnitine = O-butanoyl-(R)-carnitine + CoA. It catalyses the reaction hexanoyl-CoA + (R)-carnitine = O-hexanoyl-(R)-carnitine + CoA. It carries out the reaction octanoyl-CoA + (R)-carnitine = O-octanoyl-(R)-carnitine + CoA. The catalysed reaction is decanoyl-CoA + (R)-carnitine = O-decanoyl-(R)-carnitine + CoA. The enzyme catalyses 3-methylbutanoyl-CoA + (R)-carnitine = O-3-methylbutanoyl-(R)-carnitine + CoA. It catalyses the reaction 2-methylpropanoyl-CoA + (R)-carnitine = O-isobutanoyl-(R)-carnitine + CoA. It carries out the reaction 2-methylbutanoyl-CoA + (R)-carnitine = O-2-methylbutanoyl-(R)-carnitine + CoA. The catalysed reaction is acetoacetyl-CoA + (R)-carnitine = O-3-oxobutanoyl-(R)-carnitine + CoA. The enzyme catalyses 3-hydroxybutanoyl-CoA + (R)-carnitine = O-3-hydroxybutanoyl-(R)-carnitine + CoA. It catalyses the reaction 4,8-dimethylnonanoyl-CoA + (R)-carnitine = O-4,8-dimethylnonanoyl-(R)-carnitine + CoA. It carries out the reaction 2,6-dimethylheptanoyl-CoA + (R)-carnitine = O-2,6-dimethylheptanoyl-(R)-carnitine + CoA. Its function is as follows. Catalyzes the reversible transfer of acyl groups from carnitine to coenzyme A (CoA) and regulates the acyl-CoA/CoA ratio. Also plays a crucial role in the transport of fatty acids for beta-oxidation. Responsible for the synthesis of short- and branched-chain acylcarnitines. Active towards some branched-chain amino acid oxidation pathway (BCAAO) intermediates. Trans-2-enoyl-CoAs and 2-methylacyl-CoAs are poor substrates. In Columba livia (Rock dove), this protein is Carnitine O-acetyltransferase (CRAT).